Reading from the N-terminus, the 192-residue chain is UPF0312 protein PC1_2518 (192 aa).

The first 23 residues, 1–23 (MLKKTLLSLTAVSMLASAGSALA), serve as a signal peptide directing secretion.

The protein belongs to the UPF0312 family. Type 1 subfamily.

It is found in the periplasm. The sequence is that of UPF0312 protein PC1_2518 from Pectobacterium carotovorum subsp. carotovorum (strain PC1).